Reading from the N-terminus, the 497-residue chain is 5'-AMP-activated protein kinase subunit gamma-3 (497 aa).

A disordered region spans residues 16 to 143 (STQTPSWSSF…SSSSTDDLDQ (128 aa)). A compositionally biased stretch (polar residues) spans 39-54 (GDSTSWPSPAMTTSAE). A compositionally biased stretch (basic and acidic residues) spans 68–79 (KSQEDVEERELP). 3 CBS domains span residues 204–265 (MATS…RSPL), 287–345 (CFKP…QRTL), and 363–423 (TFRD…HLDI). ADP is bound by residues Arg-232, 247 to 252 (MLTITD), Val-292, 313 to 314 (HR), and Lys-332. AMP contacts are provided by residues Arg-232, 247 to 252 (MLTITD), Val-292, His-313, 313 to 314 (HR), Lys-332, Thr-363, Ala-368, 389 to 390 (SA), 405 to 408 (SRFD), Arg-432, Leu-440, His-461, 461 to 462 (HR), and 477 to 480 (SLSD). Residues Arg-232, 247 to 252 (MLTITD), Val-292, 313 to 314 (HR), Arg-314, and Lys-332 each bind ATP. The short motif at 300 to 321 (LFEAVYTLIKNRIHRLPVLDPV) is the AMPK pseudosubstrate element. Residues 405–408 (SRFD), Arg-432, Leu-440, and 461–462 (HR) contribute to the ADP site. ATP contacts are provided by residues 405 to 408 (SRFD), Arg-432, Leu-440, and 461 to 462 (HR). Positions 435-494 (CLEGVLSCQPHETLGEVIDRIAREQVHRLVLVDETQHLLGVVSLSDILQALVLSPAGIDA) constitute a CBS 4 domain.

Belongs to the 5'-AMP-activated protein kinase gamma subunit family. As to quaternary structure, AMPK is a heterotrimer of an alpha catalytic subunit (PRKAA1 or PRKAA2), a beta (PRKAB1 or PRKAB2) and a gamma non-catalytic subunits (PRKAG1, PRKAG2 or PRKAG3). Interacts with FNIP1 and FNIP2. In terms of processing, phosphorylated by ULK1; leading to negatively regulate AMPK activity and suggesting the existence of a regulatory feedback loop between ULK1 and AMPK. Post-translationally, glycosylated; O-GlcNAcylated by OGT, promoting the AMP-activated protein kinase (AMPK) activity.

Its function is as follows. AMP/ATP-binding subunit of AMP-activated protein kinase (AMPK), an energy sensor protein kinase that plays a key role in regulating cellular energy metabolism. In response to reduction of intracellular ATP levels, AMPK activates energy-producing pathways and inhibits energy-consuming processes: inhibits protein, carbohydrate and lipid biosynthesis, as well as cell growth and proliferation. AMPK acts via direct phosphorylation of metabolic enzymes, and by longer-term effects via phosphorylation of transcription regulators. AMPK also acts as a regulator of cellular polarity by remodeling the actin cytoskeleton; probably by indirectly activating myosin. The AMPK gamma3 subunit is a non-catalytic subunit with a regulatory role in muscle energy metabolism. It mediates binding to AMP, ADP and ATP, leading to AMPK activation or inhibition: AMP-binding results in allosteric activation of alpha catalytic subunit (PRKAA1 or PRKAA2) both by inducing phosphorylation and preventing dephosphorylation of catalytic subunits. ADP also stimulates phosphorylation, without stimulating already phosphorylated catalytic subunit. ATP promotes dephosphorylation of catalytic subunit, rendering the AMPK enzyme inactive. This Bos taurus (Bovine) protein is 5'-AMP-activated protein kinase subunit gamma-3 (PRKAG3).